Here is a 534-residue protein sequence, read N- to C-terminus: Zinc finger protein 69 homolog B (534 aa).

Residues lysine 37 and lysine 40 each participate in a glycyl lysine isopeptide (Lys-Gly) (interchain with G-Cter in SUMO2) cross-link. Residues 74–145 (LTFKDVSVDF…ERDISGVPSS (72 aa)) enclose the KRAB domain. Residues lysine 178 and lysine 235 each participate in a glycyl lysine isopeptide (Lys-Gly) (interchain with G-Cter in SUMO2) cross-link. C2H2-type zinc fingers lie at residues 279 to 301 (FECN…MRIH), 307 to 329 (FRCK…QRIH), 335 to 357 (YECK…VRIH), 363 to 385 (YECR…LRTH), 391 to 413 (FTCK…EIIH), 419 to 441 (YICN…QRTH), 447 to 469 (YKCK…QRVH), 475 to 497 (YECS…QRIH), and 503 to 525 (YDCN…CKTH).

This sequence belongs to the krueppel C2H2-type zinc-finger protein family.

The protein resides in the nucleus. May be involved in transcriptional regulation. Essential for Golgi structural integrity. The sequence is that of Zinc finger protein 69 homolog B (ZFP69B) from Homo sapiens (Human).